Consider the following 242-residue polypeptide: Ribosomal RNA small subunit methyltransferase G (242 aa).

S-adenosyl-L-methionine is bound by residues Gly-78, Leu-83, 130–131 (AE), and Arg-151.

The protein belongs to the methyltransferase superfamily. RNA methyltransferase RsmG family.

Its subcellular location is the cytoplasm. Its function is as follows. Specifically methylates the N7 position of guanine in position 518 of 16S rRNA. In Salinispora tropica (strain ATCC BAA-916 / DSM 44818 / JCM 13857 / NBRC 105044 / CNB-440), this protein is Ribosomal RNA small subunit methyltransferase G.